Here is a 494-residue protein sequence, read N- to C-terminus: ATP synthase subunit beta (494 aa).

Position 177 to 184 (177 to 184) interacts with ATP; that stretch reads GGAGVGKT.

This sequence belongs to the ATPase alpha/beta chains family. In terms of assembly, F-type ATPases have 2 components, CF(1) - the catalytic core - and CF(0) - the membrane proton channel. CF(1) has five subunits: alpha(3), beta(3), gamma(1), delta(1), epsilon(1). CF(0) has three main subunits: a(1), b(2) and c(9-12). The alpha and beta chains form an alternating ring which encloses part of the gamma chain. CF(1) is attached to CF(0) by a central stalk formed by the gamma and epsilon chains, while a peripheral stalk is formed by the delta and b chains.

The protein resides in the cell membrane. The enzyme catalyses ATP + H2O + 4 H(+)(in) = ADP + phosphate + 5 H(+)(out). Produces ATP from ADP in the presence of a proton gradient across the membrane. The catalytic sites are hosted primarily by the beta subunits. This is ATP synthase subunit beta from Bifidobacterium adolescentis (strain ATCC 15703 / DSM 20083 / NCTC 11814 / E194a).